A 264-amino-acid chain; its full sequence is MKYMITSKGDEKSDLLRLNMIAGFGEYDMEYDEIEPEIVISIGGDGTFLSAFHQYEERLDEIAFIGIHTGHLGFYADWRPAEADKLVKLLAKGEYQKVSYPLLKTTVKYGIGKKEAEYLALNESTVKSSGGPFVVDVVINDLHFERFRGDGLCMSTPSGTTAYNKSLGGALMHPSIEAMQLTEMASINNRVYRTIGSPLVFPKHHVVSLQPVNDKDFQISVDHLSILHRDVQEIRYEVSAKKVHFARFRSFPFWRRVHDSFIED.

Residue Asp-45 is the Proton acceptor of the active site. Residues 45–46 (DG), 122–123 (NE), Arg-148, Asp-150, 161–166 (TAYNKS), and Ala-185 contribute to the NAD(+) site.

This sequence belongs to the NAD kinase family. It depends on a divalent metal cation as a cofactor.

It localises to the cytoplasm. It catalyses the reaction NAD(+) + ATP = ADP + NADP(+) + H(+). Functionally, involved in the regulation of the intracellular balance of NAD and NADP, and is a key enzyme in the biosynthesis of NADP. Catalyzes specifically the phosphorylation on 2'-hydroxyl of the adenosine moiety of NAD to yield NADP. This chain is NAD kinase 1, found in Listeria innocua serovar 6a (strain ATCC BAA-680 / CLIP 11262).